The primary structure comprises 1161 residues: ATP-dependent helicase/deoxyribonuclease subunit B (1161 aa).

The protein belongs to the helicase family. AddB/RexB type 2 subfamily. In terms of assembly, heterodimer of AddA and RexB. Requires Mg(2+) as cofactor.

The heterodimer acts as both an ATP-dependent DNA helicase and an ATP-dependent, dual-direction single-stranded exonuclease. Recognizes the chi site generating a DNA molecule suitable for the initiation of homologous recombination. This subunit has 5' -&gt; 3' nuclease activity but not helicase activity. This chain is ATP-dependent helicase/deoxyribonuclease subunit B, found in Oenococcus oeni (strain ATCC BAA-331 / PSU-1).